Here is a 434-residue protein sequence, read N- to C-terminus: Sodium/bile acid cotransporter 5 (434 aa).

Positions 1–18 (MSGKLFIILLLLVTPGEA) are cleaved as a signal peptide. The Extracellular portion of the chain corresponds to 19 to 129 (RKSFLRFLNI…VSVFRQTEDS (111 aa)). Residues asparagine 73 and asparagine 96 are each glycosylated (N-linked (GlcNAc...) asparagine). Residues 130–150 (LFQEPIHVNSSVFLLVLLMIL) form a helical membrane-spanning segment. At 151-172 (LNKCAFGCKIELQVLQTVWKRP) the chain is on the cytoplasmic side. The helical transmembrane segment at 173 to 193 (LPILLGAVTQFFLMPFCGFLL) threads the bilayer. Over 194-195 (SQ) the chain is Extracellular. The helical transmembrane segment at 196-216 (ILGLSKAQAFGFVMTCTCPGG) threads the bilayer. Residues 217-232 (GGGYLFALLLEGDVTL) lie on the Cytoplasmic side of the membrane. Residues 233 to 255 (AILMACTSTSLALIMMPVNSYLY) traverse the membrane as a helical segment. Over 256 to 268 (SCLLGLAGVFHVP) the chain is Extracellular. A helical transmembrane segment spans residues 269–289 (VLKIVSTLLFILTPVSIGIVI). Residues 290-306 (KHRMPKKAVCLERVVQP) are Cytoplasmic-facing. The helical transmembrane segment at 307-327 (LSLTLMLVGVYLAFRMGLVFL) threads the bilayer. The Extracellular segment spans residues 328 to 331 (RMAN). A helical membrane pass occupies residues 332–352 (LEVFLLGLLVPVLGFSFGYSF). The Cytoplasmic portion of the chain corresponds to 353–365 (AKVYLLPLPVCKT). Residues 366–386 (VAIESGMLNSFLALAIIQLSF) traverse the membrane as a helical segment. Topologically, residues 387-395 (PQSKAYEAS) are extracellular. The chain crosses the membrane as a helical span at residues 396–416 (VAPFTVAMCSSCEMLLLLLVY). The Cytoplasmic portion of the chain corresponds to 417–434 (KAKKRPLLSTENEKAPLV).

It belongs to the bile acid:sodium symporter (BASS) (TC 2.A.28) family.

The protein localises to the membrane. This chain is Sodium/bile acid cotransporter 5 (Slc10a5), found in Rattus norvegicus (Rat).